The following is a 977-amino-acid chain: SFYDYEFESTFEYSSEINSIVDGVLPDVDSGFPTDTEETKSEPKQPDTKPEQPSVSKPDSSVNGIVPGVSEPKPKQPSGSKPDGSAPGLKPGGGKPEGGIKPEPQVPITNLGSSTSQSSSYISITNLYDILSIIFNLSHIGGTGKGYTDRVSGGVGIGASGGAGGVGGAGGVGGAGGVGGAGGAGGADGASVGAGGGADGGAYGGGYGAGYGGADGGADGGADGGGYGGADGGVGAGGYGGAGGGAGGGDYYSDSSDSSDSDSSGSDSSESGSSESGSYYTGYNNDGSLGDNGRGSSGHRYSDHGSPGNGSPDNGTPGSGSSRYTFSDDGSLAYKSQDNGTPGRKATNYRFSDDGSLAYGAQDNGKPGSGSPRYRYSDDGSLGNGFPDNGASVGISPSIESPGGPVLGSLEDELLGSDSSDEDDIDDGLGGLGLGAGPGGPGGFVKTPKHKPRTDKKKKPDDKPKRKPKTSRKPKTSRKPKTSRKPKTSRKSKTSRKTKTSRKSKRKSTRKTTRKSSRKVSRKTSRKPRRKITRRPVQRKQPREYKQESPEVEREHSAPSTTNVEIYRDIIKILITSLTSSRGDNGKSGDDGSGSGNGGGDDGNGGGAGNGGGAGNGGGAGNGGGAGNGGGNGGGGNGGGGNDNGNDNGNDDCHYDDDDEHRNRCEDDDDYREKCCDDDESGGSGNFDLSSILKLMQGQSGSSSSSSATESESSSTSTTPSTSSLDLSAILSTLSGRSQKTRSGSALDISSLLGVTGSRPSVATSRGSGLDLSAVLSALGGGKPSTGTTVTSKPSTGTSSAPGLDLSGLLGQLGPILSGLLGPKPDSKPSTGSPSTTSKPSTGSSSGPGLDLSGLLGNLAPVLSALTGGKKPTASSKPTAPSTPSKSTGSSPGKGLDLSGLLGKLSPAPKPKAPKPSIGSGLLPGLDLSSILGKLSGGKKPISGSGKGSKGSSRFCRCALSCSCKSIDYGCVNIGCK.

The disordered stretch occupies residues 23–116; that stretch reads GVLPDVDSGF…PITNLGSSTS (94 aa). Residues 37-50 are compositionally biased toward basic and acidic residues; that stretch reads EETKSEPKQPDTKP. Residues 51–63 show a composition bias toward polar residues; the sequence is EQPSVSKPDSSVN. An N-linked (GlcNAc...) asparagine glycan is attached at Asn-136. Disordered stretches follow at residues 246–767 and 780–922; these read AGGG…TSRG and GGGK…GSGL. The span at 251–278 shows a compositional bias: low complexity; the sequence is YYSDSSDSSDSDSSGSDSSESGSSESGS. Positions 309–325 are enriched in polar residues; the sequence is NGSPDNGTPGSGSSRYT. Over residues 410–427 the composition is skewed to acidic residues; the sequence is LEDELLGSDSSDEDDIDD. Positions 428–443 are enriched in gly residues; sequence GLGGLGLGAGPGGPGG. Basic residues-rich tracts occupy residues 447-457 and 465-540; these read TPKHKPRTDKK and KRKP…VQRK. Over residues 541-557 the composition is skewed to basic and acidic residues; the sequence is QPREYKQESPEVEREHS. A compositionally biased stretch (low complexity) spans 572 to 583; that stretch reads KILITSLTSSRG. Residues 591–643 are compositionally biased toward gly residues; it reads DGSGSGNGGGDDGNGGGAGNGGGAGNGGGAGNGGGAGNGGGNGGGGNGGGGND. The span at 660 to 675 shows a compositional bias: basic and acidic residues; the sequence is EHRNRCEDDDDYREKC. Residues 700 to 724 are compositionally biased toward low complexity; it reads SGSSSSSSATESESSSTSTTPSTSS. Polar residues-rich tracts occupy residues 730-744, 758-767, and 785-801; these read ILST…TRSG, SRPSVATSRG, and STGT…TSSA. Composition is skewed to low complexity over residues 803–814, 822–857, and 870–907; these read GLDLSGLLGQLG, GPKP…GLLG, and KKPT…KLSP.

In terms of tissue distribution, component of the acid-insoluble and acid-soluble organic matrix of calcified layers of the shell (at protein level).

It is found in the secreted. The sequence is that of Aspartate, glycine, lysine and serine-rich protein from Lottia gigantea (Giant owl limpet).